We begin with the raw amino-acid sequence, 357 residues long: Histidinol-phosphate aminotransferase 2 (357 aa).

K216 is subject to N6-(pyridoxal phosphate)lysine.

The protein belongs to the class-II pyridoxal-phosphate-dependent aminotransferase family. Histidinol-phosphate aminotransferase subfamily. As to quaternary structure, homodimer. Requires pyridoxal 5'-phosphate as cofactor.

The enzyme catalyses L-histidinol phosphate + 2-oxoglutarate = 3-(imidazol-4-yl)-2-oxopropyl phosphate + L-glutamate. The protein operates within amino-acid biosynthesis; L-histidine biosynthesis; L-histidine from 5-phospho-alpha-D-ribose 1-diphosphate: step 7/9. This is Histidinol-phosphate aminotransferase 2 from Idiomarina loihiensis (strain ATCC BAA-735 / DSM 15497 / L2-TR).